A 447-amino-acid polypeptide reads, in one-letter code: Phosphoglucosamine mutase (447 aa).

S107 acts as the Phosphoserine intermediate in catalysis. Positions 107, 246, 248, and 250 each coordinate Mg(2+). At S107 the chain carries Phosphoserine.

It belongs to the phosphohexose mutase family. Mg(2+) is required as a cofactor. In terms of processing, activated by phosphorylation.

The catalysed reaction is alpha-D-glucosamine 1-phosphate = D-glucosamine 6-phosphate. Its function is as follows. Catalyzes the conversion of glucosamine-6-phosphate to glucosamine-1-phosphate. The protein is Phosphoglucosamine mutase of Ralstonia nicotianae (strain ATCC BAA-1114 / GMI1000) (Ralstonia solanacearum).